We begin with the raw amino-acid sequence, 397 residues long: Succinyl-diaminopimelate desuccinylase (397 aa).

A Zn(2+)-binding site is contributed by His73. Asp75 is a catalytic residue. Residue Asp106 participates in Zn(2+) binding. Glu140 acts as the Proton acceptor in catalysis. 3 residues coordinate Zn(2+): Glu141, Glu169, and His366.

The protein belongs to the peptidase M20A family. DapE subfamily. Homodimer. Zn(2+) serves as cofactor. The cofactor is Co(2+).

The catalysed reaction is N-succinyl-(2S,6S)-2,6-diaminopimelate + H2O = (2S,6S)-2,6-diaminopimelate + succinate. Its pathway is amino-acid biosynthesis; L-lysine biosynthesis via DAP pathway; LL-2,6-diaminopimelate from (S)-tetrahydrodipicolinate (succinylase route): step 3/3. Functionally, catalyzes the hydrolysis of N-succinyl-L,L-diaminopimelic acid (SDAP), forming succinate and LL-2,6-diaminopimelate (DAP), an intermediate involved in the bacterial biosynthesis of lysine and meso-diaminopimelic acid, an essential component of bacterial cell walls. This Rhizobium meliloti (strain 1021) (Ensifer meliloti) protein is Succinyl-diaminopimelate desuccinylase.